The sequence spans 926 residues: Taz1-interacting factor 1 (926 aa).

Coiled-coil stretches lie at residues 461–496 (REAV…SHQN) and 548–671 (SFTD…LKQK). Residue Ser-548 is modified to Phosphoserine. Position 550 is a phosphothreonine (Thr-550). At Ser-552 the chain carries Phosphoserine.

This sequence belongs to the ATG11 family. In terms of assembly, homodimer and potential homooligomers. Interacts with taz1.

Its subcellular location is the preautophagosomal structure membrane. It is found in the vacuole membrane. Involved in cytoplasm to vacuole transport (Cvt), pexophagy, mitophagy and nucleophagy. Recruits mitochondria for their selective degradation via autophagy (mitophagy) during starvation. Works as scaffold proteins that recruit ATG proteins to the preautophagosome (PAS), the site of vesicle/autophagosome formation. Required for atg9 anterograde transport from the mitochondria to the PAS. Required for nitrogen starvation-induced sexual development and for entering the dormant G0 state. This is Taz1-interacting factor 1 (taf1) from Schizosaccharomyces pombe (strain 972 / ATCC 24843) (Fission yeast).